A 233-amino-acid chain; its full sequence is Large ribosomal subunit protein uL1 (233 aa).

Belongs to the universal ribosomal protein uL1 family. In terms of assembly, part of the 50S ribosomal subunit.

Functionally, binds directly to 23S rRNA. The L1 stalk is quite mobile in the ribosome, and is involved in E site tRNA release. Protein L1 is also a translational repressor protein, it controls the translation of the L11 operon by binding to its mRNA. The chain is Large ribosomal subunit protein uL1 from Psychrobacter arcticus (strain DSM 17307 / VKM B-2377 / 273-4).